The primary structure comprises 176 residues: uncharacterized protein (176 aa).

This is an uncharacterized protein from Aquifex aeolicus (strain VF5).